A 1690-amino-acid chain; its full sequence is Collagen alpha-4(IV) chain (1690 aa).

The first 38 residues, 1-38 (MWSLHIVLMRCSFRLTKSLATGPWSLILILFSVQYVYG), serve as a signal peptide directing secretion. A 7S domain region spans residues 39-64 (SGKKYIGPCGGRDCSVCHCVPEKGSR). Disordered stretches follow at residues 61-173 (KGSR…GEKG) and 187-258 (GDRG…GPTL). Positions 65–1459 (GPPGPPGPQG…IGDPGPKGFG (1395 aa)) are triple-helical region. Residues 66-75 (PPGPPGPQGP) are compositionally biased toward pro residues. Residues 76–88 (IGPLGAPGPIGLS) show a composition bias toward low complexity. A Cell attachment site motif is present at residues 94–96 (RGD). Asn142 carries an N-linked (GlcNAc...) asparagine glycan. Positions 145–147 (RGD) match the Cell attachment site motif. Positions 149-164 (GFPGGRGALGPGGPLG) are enriched in gly residues. Residues 189–191 (RGD) carry the Cell attachment site motif. Over residues 199–208 (GSWGAGGPAG) the composition is skewed to gly residues. The Cell attachment site signature appears at 310–312 (RGD). 3 disordered regions span residues 369–390 (PGDP…PGPP), 405–451 (GPPG…GLQG), and 469–1457 (GIKG…GPKG). A compositionally biased stretch (low complexity) spans 412–434 (FPGLPGLPGEAGIPGRPDSAPGK). 2 stretches are compositionally biased toward pro residues: residues 498–507 (PMGPPGPPGL) and 529–540 (PGPPGAEGPPGL). Positions 586–607 (HGRDGHAGEKGDPGPPGDHEDA) are enriched in basic and acidic residues. The segment covering 644–655 (PGVPGHPGVRGP) has biased composition (low complexity). Asn669 is a glycosylation site (N-linked (GlcNAc...) asparagine). A compositionally biased stretch (pro residues) spans 681–690 (FDGPPGPKGF). Short sequence motifs (cell attachment site) lie at residues 724 to 726 (RGD) and 785 to 787 (RGD). Over residues 849 to 858 (GAPGGKGQPG) the composition is skewed to gly residues. Low complexity-rich tracts occupy residues 866 to 880 (AGMK…RPGA) and 907 to 917 (PRGLPGFPGFP). A Cell attachment site motif is present at residues 989–991 (RGD). Residues 1023–1032 (PGPPGPPGPP) are compositionally biased toward pro residues. Residues 1108–1117 (PGIQGPRGSP) are compositionally biased toward low complexity. Pro residues predominate over residues 1119 to 1131 (RPGPPGSSGPPGC). The Cell attachment site motif lies at 1212-1214 (RGD). Composition is skewed to pro residues over residues 1220-1243 (ISPP…PPGP), 1256-1280 (DPGP…PPGL), 1297-1309 (PGPP…PGPP), 1338-1353 (FPGP…PPGR), and 1443-1452 (GPGPPGPIGD). One can recognise a Collagen IV NC1 domain in the interval 1465-1690 (GFLLVLHSQT…SRCQVCVKYS (226 aa)). 6 cysteine pairs are disulfide-bonded: Cys1480–Cys1569, Cys1513–Cys1566, Cys1525–Cys1531, Cys1588–Cys1686, Cys1622–Cys1683, and Cys1634–Cys1641.

The protein belongs to the type IV collagen family. In terms of assembly, there are six type IV collagen isoforms, alpha 1(IV)-alpha 6(IV), each of which can form a triple helix structure with 2 other chains to generate type IV collagen network. The alpha 3(IV) chain forms a triple helical protomer with alpha 4(IV) and alpha 5(IV); this triple helical structure dimerizes through NC1-NC1 domain interactions such that the alpha 3(IV), alpha 4(IV) and alpha 5(IV) chains of one protomer connect with the alpha 5(IV), alpha 4(IV) and alpha 3(IV) chains of the opposite protomer, respectively. Associates with LAMB2 at the neuromuscular junction and in GBM. Post-translationally, prolines at the third position of the tripeptide repeating unit (G-X-Y) are hydroxylated in some or all of the chains. Type IV collagens contain numerous cysteine residues which are involved in inter- and intramolecular disulfide bonding. 12 of these, located in the NC1 domain, are conserved in all known type IV collagens. In terms of processing, the trimeric structure of the NC1 domains is stabilized by covalent bonds between Lys and Met residues. As to expression, expressed in Bruch's membrane, outer plexiform layer, inner nuclear layer, inner plexiform layer, ganglion cell layer, inner limiting membrane and around the blood vessels of the retina (at protein level). Alpha 3 and alpha 4 type IV collagens are colocalized and present in kidney, eye, basement membranes of lens capsule, cochlea, lung, skeletal muscle, aorta, synaptic fibers, fetal kidney and fetal lung. PubMed:8083201 reports similar levels of expression of alpha 3 and alpha 4 type IV collagens in kidney, but PubMed:7523402 reports that in kidney levels of alpha 3 type IV collagen are significantly lower than those of alpha 4 type IV collagen. Highest levels of expression of alpha 4 type IV collagen are detected in kidney, calvaria, neuroretina and cardiac muscle. Lower levels of expression are observed in brain, lung and thymus, and no expression is detected in choroid plexus, liver, adrenal, pancreas, ileum or skin.

It localises to the secreted. The protein resides in the extracellular space. It is found in the extracellular matrix. The protein localises to the basement membrane. Functionally, type IV collagen is the major structural component of glomerular basement membranes (GBM), forming a 'chicken-wire' meshwork together with laminins, proteoglycans and entactin/nidogen. The sequence is that of Collagen alpha-4(IV) chain (COL4A4) from Homo sapiens (Human).